The sequence spans 60 residues: Toxin S4C8 (60 aa).

4 disulfides stabilise this stretch: C3–C22, C17–C39, C41–C52, and C53–C58. Residues 41 to 48 (CPTAMWPY) form an important for binding to L-type calcium channels region.

The protein belongs to the three-finger toxin family. Short-chain subfamily. L-type calcium blocker sub-subfamily. In terms of tissue distribution, expressed by the venom gland.

Its subcellular location is the secreted. This specific blocker of the L-type calcium channel (Cav1/CACNA1) is a smooth muscle relaxant and an inhibitor of cardiac contractions. The chain is Toxin S4C8 from Dendroaspis jamesoni kaimosae (Eastern Jameson's mamba).